Reading from the N-terminus, the 1383-residue chain is Cell surface hyaluronidase (1383 aa).

A disordered region spans residues 1 to 76 (MYAAGSRGHS…QRTPSESRKR (76 aa)). Residues 1 to 82 (MYAAGSRGHS…SRKRKRHKNT (82 aa)) lie on the Cytoplasmic side of the membrane. 3 positions are modified to phosphoserine: serine 10, serine 53, and serine 63. The helical; Signal-anchor for type II membrane protein transmembrane segment at 83–103 (FICFAITSFSFFVALAVILGI) threads the bilayer. Residues 104–1383 (SSKYAPDENC…DLLQQALKVL (1280 aa)) are Extracellular-facing. The G8 domain maps to 121–245 (RNWDPGQDSA…QRTSWTMLAR (125 aa)). In terms of domain architecture, GG-type lectin 1 spans 255 to 412 (GSYAFEKDFS…ISLSGFRVDI (158 aa)). Asparagine 292 carries N-linked (GlcNAc...) asparagine glycosylation. 3 PbH1 repeats span residues 669–691 (HPNN…WYLF), 711–733 (TPLG…FVDK), and 791–812 (GGDI…TFAS). N-linked (GlcNAc...) asparagine glycans are attached at residues asparagine 914 and asparagine 1234. Positions 1208–1366 (KSYLPVRFQS…MEEYGCSRTG (159 aa)) constitute a GG-type lectin 2 domain.

Belongs to the CEMIP family. Ca(2+) is required as a cofactor. Widely expressed. Strongly expressed in endothelial cells in the subcapsular sinus of lymph nodes and in the liver sinusoid, two primary sites implicated in systemic hyaluronan turnover.

It is found in the cell membrane. The catalysed reaction is Random hydrolysis of (1-&gt;4)-linkages between N-acetyl-beta-D-glucosamine and D-glucuronate residues in hyaluronate.. Cell surface hyaluronidase that mediates the initial cleavage of extracellular high-molecular-weight hyaluronan into intermediate-size hyaluronan of approximately 5 kDa fragments. Very specific to hyaluronan; not able to cleave chondroitin sulfate or dermatan sulfate. Has an essential function in systemic hyaluronan catabolism and turnover and regulates cell adhesion and migration via hyaluronan degradation at focal adhesion sites. Acts as a regulator of angiogenesis and heart morphogenesis by mediating degradation of extracellular hyaluronan, thereby regulating VEGF signaling. The sequence is that of Cell surface hyaluronidase from Mus musculus (Mouse).